The primary structure comprises 365 residues: Putative glutamate--cysteine ligase 2-3 (365 aa).

The protein belongs to the glutamate--cysteine ligase type 2 family. YbdK subfamily.

The enzyme catalyses L-cysteine + L-glutamate + ATP = gamma-L-glutamyl-L-cysteine + ADP + phosphate + H(+). Its function is as follows. ATP-dependent carboxylate-amine ligase which exhibits weak glutamate--cysteine ligase activity. This Mycolicibacterium smegmatis (strain ATCC 700084 / mc(2)155) (Mycobacterium smegmatis) protein is Putative glutamate--cysteine ligase 2-3.